The chain runs to 302 residues: N-acetyl-D-glucosamine kinase (302 aa).

Residues 4-11 (GFDIGGTK) and 133-139 (GGGGLVL) each bind ATP. Zn(2+) contacts are provided by His-156, Cys-176, Cys-178, and Cys-183.

Belongs to the ROK (NagC/XylR) family. NagK subfamily.

It catalyses the reaction N-acetyl-D-glucosamine + ATP = N-acetyl-D-glucosamine 6-phosphate + ADP + H(+). It participates in cell wall biogenesis; peptidoglycan recycling. Its function is as follows. Catalyzes the phosphorylation of N-acetyl-D-glucosamine (GlcNAc) derived from cell-wall degradation, yielding GlcNAc-6-P. The chain is N-acetyl-D-glucosamine kinase from Salmonella typhi.